Consider the following 366-residue polypeptide: tRNA/tmRNA (uracil-C(5))-methyltransferase (366 aa).

The S-adenosyl-L-methionine site is built by Gln-187, Tyr-215, Asn-220, Glu-236, and Asp-297. The active-site Nucleophile is the Cys-322. The active-site Proton acceptor is Glu-356.

The protein belongs to the class I-like SAM-binding methyltransferase superfamily. RNA M5U methyltransferase family. TrmA subfamily.

The enzyme catalyses uridine(54) in tRNA + S-adenosyl-L-methionine = 5-methyluridine(54) in tRNA + S-adenosyl-L-homocysteine + H(+). It catalyses the reaction uridine(341) in tmRNA + S-adenosyl-L-methionine = 5-methyluridine(341) in tmRNA + S-adenosyl-L-homocysteine + H(+). Functionally, dual-specificity methyltransferase that catalyzes the formation of 5-methyluridine at position 54 (m5U54) in all tRNAs, and that of position 341 (m5U341) in tmRNA (transfer-mRNA). This Marinomonas sp. (strain MWYL1) protein is tRNA/tmRNA (uracil-C(5))-methyltransferase.